The sequence spans 155 residues: Endoribonuclease YbeY (155 aa).

The Zn(2+) site is built by H113, H117, and H123.

The protein belongs to the endoribonuclease YbeY family. Zn(2+) serves as cofactor.

It is found in the cytoplasm. Single strand-specific metallo-endoribonuclease involved in late-stage 70S ribosome quality control and in maturation of the 3' terminus of the 16S rRNA. The sequence is that of Endoribonuclease YbeY from Ureaplasma urealyticum serovar 10 (strain ATCC 33699 / Western).